Consider the following 350-residue polypeptide: Deoxyhypusine synthase-like protein (350 aa).

Belongs to the deoxyhypusine synthase family.

The protein is Deoxyhypusine synthase-like protein of Chlorobaculum tepidum (strain ATCC 49652 / DSM 12025 / NBRC 103806 / TLS) (Chlorobium tepidum).